Here is a 110-residue protein sequence, read N- to C-terminus: UPF0060 membrane protein Nmul_A0351 (110 aa).

4 consecutive transmembrane segments (helical) span residues Leu7–Trp27, Ser33–Leu53, Ala63–Val83, and Ala87–Pro107.

The protein belongs to the UPF0060 family.

It is found in the cell inner membrane. In Nitrosospira multiformis (strain ATCC 25196 / NCIMB 11849 / C 71), this protein is UPF0060 membrane protein Nmul_A0351.